Here is an 873-residue protein sequence, read N- to C-terminus: MSDSDKELENQIIEAGEKLIDPPSSLDELLSFLDKLFVSLAEVEQSPPDSMQNALTPLMKGLVGGKLFKHSDVDVKVAVAACISEITRITAPDAPYDDDQMKEVFKLIVSSFEDLVDKSSRSYAKRISILETVAKVRSCVVMLDLECDALLIEMFQHFLKAIRDHHSGNVFSSMENIMTLVLEESEDIPSEMLSPILHSVKKDDEISQVSRRLAEQVLSNCASKLKTYLTEAVKSSGVPLDKYSNIVASICEGTFSALQQDQVVANEKEDSQGHIKRETEVEKAAEISTPERTDAPKDESGKSGVSNGVAQQNDSSVDTDSMKKQDDTGAKDEPQQLDNPRNTDLNNTTEEKPDVEHQIEEKENESSSVKQADLSKDSDIKEETEPAELLDSKDVLTSPPVDSSVTAATSSENEKNKSVQILPSKTSGDETANVSSPSMAEELPEQSVPKKTANQKKKESSTEEVKPSASIATEEVSEEPNTSEPQVTKKSGKKVASSSKTKPTVPPSKKSTSETKVAKQSEKKVVGSDNAQESTKPKEEKKKPGRGKAIDEESLHTSSGDNEKPAVSSGKLASKSKKEAKQTVEESPNSNTKRKRSLGQGKASGESLVGSRIKVWWPMDQAYYKGVVESYDAAKKKHLVIYDDGDQEILYLKNQKWSPLDESELSQDEEAADQTGQEEDASTVPLTKKAKTGKQSKMDNSSAKKGSGAGSSKAKATPASKSSKTSQDDKTASKSKDSKEASREEEASSEEESEEEEPPKTVGKSGSSRSKKDISSVSKSGKSKASSKKKEEPSKATTSSKSKSGPVKSVPAKSKTGKGKAKSGSASTPASKAKESASESESEETPKEPEPATKAKSGKSQGSQSKSGKKRKR.

HEAT repeat units lie at residues 53–92 (NALT…ITAP), 99–136 (DQMK…VAKV), 149–187 (ALLI…ESED), and 189–227 (PSEM…KLKT). The span at 266–301 (NEKEDSQGHIKRETEVEKAAEISTPERTDAPKDESG) shows a compositional bias: basic and acidic residues. 2 disordered regions span residues 266 to 611 (NEKE…LVGS) and 658 to 873 (SPLD…KRKR). Threonine 289 carries the phosphothreonine modification. Positions 303–319 (SGVSNGVAQQNDSSVDT) are enriched in polar residues. Residues 320–334 (DSMKKQDDTGAKDEP) are compositionally biased toward basic and acidic residues. Positions 336–348 (QLDNPRNTDLNNT) are enriched in polar residues. 2 stretches are compositionally biased toward basic and acidic residues: residues 349-365 (TEEK…KENE) and 373-394 (DLSK…DSKD). 2 stretches are compositionally biased toward polar residues: residues 400 to 411 (PVDSSVTAATSS) and 418 to 438 (SVQI…SSPS). Residues 456–466 (KKKESSTEEVK) show a composition bias toward basic and acidic residues. Residues 494-510 (KVASSSKTKPTVPPSKK) are compositionally biased toward low complexity. 2 stretches are compositionally biased toward basic and acidic residues: residues 511-526 (STSE…KKVV) and 535-555 (TKPK…EESL). Residues 661 to 681 (DESELSQDEEAADQTGQEEDA) are compositionally biased toward acidic residues. The segment covering 701–725 (SSAKKGSGAGSSKAKATPASKSSKT) has biased composition (low complexity). Residues 726–746 (SQDDKTASKSKDSKEASREEE) show a composition bias toward basic and acidic residues. Residues 747–757 (ASSEEESEEEE) show a composition bias toward acidic residues. 2 stretches are compositionally biased toward low complexity: residues 795–814 (KATT…PAKS) and 822–831 (KSGSASTPAS). Residues 844-853 (ETPKEPEPAT) are compositionally biased toward basic and acidic residues. Positions 854–866 (KAKSGKSQGSQSK) are enriched in low complexity.

This sequence belongs to the PDS5 family. Interacts with the cohesin complex.

It is found in the nucleus. In terms of biological role, cohesin cofactor dispensable during the meiotic division but playing an important role in DNA repair by homologous recombination (HR) probably by helping SMC5/SMC6 complex. Regulator of sister chromatid cohesion in mitosis which may stabilize cohesin complex association with chromatin. May couple sister chromatid cohesion during mitosis to DNA replication. Cohesion ensures that chromosome partitioning is accurate in both meiotic and mitotic cells and plays an important role in DNA repair. This chain is Sister chromatid cohesion protein PDS5 homolog C, found in Arabidopsis thaliana (Mouse-ear cress).